A 654-amino-acid polypeptide reads, in one-letter code: DNA ligase (654 aa).

Residues 32–36 (DAVYD) and 81–82 (SL) contribute to the NAD(+) site. Catalysis depends on lysine 112, which acts as the N6-AMP-lysine intermediate. Arginine 133, glutamate 167, and lysine 306 together coordinate NAD(+). Zn(2+) is bound by residues cysteine 400, cysteine 403, cysteine 416, and cysteine 421. One can recognise a BRCT domain in the interval 577–654 (ESSSIFSHKT…EEELLKYLKE (78 aa)).

This sequence belongs to the NAD-dependent DNA ligase family. LigA subfamily. Requires Mg(2+) as cofactor. Mn(2+) serves as cofactor.

It carries out the reaction NAD(+) + (deoxyribonucleotide)n-3'-hydroxyl + 5'-phospho-(deoxyribonucleotide)m = (deoxyribonucleotide)n+m + AMP + beta-nicotinamide D-nucleotide.. DNA ligase that catalyzes the formation of phosphodiester linkages between 5'-phosphoryl and 3'-hydroxyl groups in double-stranded DNA using NAD as a coenzyme and as the energy source for the reaction. It is essential for DNA replication and repair of damaged DNA. This chain is DNA ligase, found in Helicobacter acinonychis (strain Sheeba).